A 90-amino-acid polypeptide reads, in one-letter code: Small ribosomal subunit protein bS16 (90 aa).

The protein belongs to the bacterial ribosomal protein bS16 family.

In Listeria monocytogenes serotype 4b (strain F2365), this protein is Small ribosomal subunit protein bS16.